Reading from the N-terminus, the 92-residue chain is Secreted RxLR effector protein RXLR-C02 (92 aa).

The first 21 residues, 1-21, serve as a signal peptide directing secretion; sequence MQFHLLVMTTIAASFAATGSA. The short motif at 48–51 is the RxLR element; the sequence is RALR. Positions 54-75 are disordered; sequence ENRGLIGDDSDSSISDSDSEAK.

This sequence belongs to the RxLR effector family.

The protein localises to the secreted. It localises to the host cytoplasm. Its subcellular location is the host nucleus. Its function is as follows. Secreted effector that suppresses pattern-triggered immunity (PTI) in plant host. The polypeptide is Secreted RxLR effector protein RXLR-C02 (Plasmopara halstedii (Downy mildew of sunflower)).